The sequence spans 102 residues: Iron-sulfur cluster assembly protein CyaY (102 aa).

This sequence belongs to the frataxin family.

In terms of biological role, involved in iron-sulfur (Fe-S) cluster assembly. May act as a regulator of Fe-S biogenesis. The polypeptide is Iron-sulfur cluster assembly protein CyaY (Histophilus somni (strain 2336) (Haemophilus somnus)).